Here is a 209-residue protein sequence, read N- to C-terminus: Large ribosomal subunit protein uL3 (209 aa).

The disordered stretch occupies residues 122–151 (AIKRHGQSRGPMSHGSRYHRRPGSMGPVDP).

It belongs to the universal ribosomal protein uL3 family. As to quaternary structure, part of the 50S ribosomal subunit. Forms a cluster with proteins L14 and L19.

Its function is as follows. One of the primary rRNA binding proteins, it binds directly near the 3'-end of the 23S rRNA, where it nucleates assembly of the 50S subunit. This chain is Large ribosomal subunit protein uL3, found in Bacillus velezensis (strain DSM 23117 / BGSC 10A6 / LMG 26770 / FZB42) (Bacillus amyloliquefaciens subsp. plantarum).